We begin with the raw amino-acid sequence, 364 residues long: Probable protein phosphatase methylesterase 1 (364 aa).

The tract at residues 1 to 53 (MSDDKLDTLPDLQSETSHVTTPHRQNDLLRQAVTHGRPPPVPSTSTSGKKREM) is disordered. The span at 11-23 (DLQSETSHVTTPH) shows a compositional bias: polar residues. Catalysis depends on residues serine 164, aspartate 190, and histidine 316.

Belongs to the AB hydrolase superfamily.

It carries out the reaction [phosphatase 2A protein]-C-terminal L-leucine methyl ester + H2O = [phosphatase 2A protein]-C-terminal L-leucine + methanol + H(+). In terms of biological role, demethylates proteins that have been reversibly carboxymethylated. This Caenorhabditis elegans protein is Probable protein phosphatase methylesterase 1.